The sequence spans 447 residues: GTPase Der (447 aa).

2 EngA-type G domains span residues 3-167 (PVIA…VQER) and 181-354 (VKIA…AAAM). Residues 9 to 16 (GRPNVGKS), 56 to 60 (DTGGF), 119 to 122 (NKAE), 187 to 194 (GRPNVGKS), 234 to 238 (DTAGL), and 299 to 302 (NKWD) contribute to the GTP site. The 85-residue stretch at 355 to 439 (VKLPTPQLTR…PLRIEFRTNK (85 aa)) folds into the KH-like domain.

This sequence belongs to the TRAFAC class TrmE-Era-EngA-EngB-Septin-like GTPase superfamily. EngA (Der) GTPase family. In terms of assembly, associates with the 50S ribosomal subunit.

Functionally, GTPase that plays an essential role in the late steps of ribosome biogenesis. This chain is GTPase Der, found in Cupriavidus taiwanensis (strain DSM 17343 / BCRC 17206 / CCUG 44338 / CIP 107171 / LMG 19424 / R1) (Ralstonia taiwanensis (strain LMG 19424)).